The chain runs to 156 residues: Small ribosomal subunit protein uS7 (156 aa).

Belongs to the universal ribosomal protein uS7 family. In terms of assembly, part of the 30S ribosomal subunit. Contacts proteins S9 and S11.

Its function is as follows. One of the primary rRNA binding proteins, it binds directly to 16S rRNA where it nucleates assembly of the head domain of the 30S subunit. Is located at the subunit interface close to the decoding center, probably blocks exit of the E-site tRNA. In Janthinobacterium sp. (strain Marseille) (Minibacterium massiliensis), this protein is Small ribosomal subunit protein uS7.